Consider the following 989-residue polypeptide: R3H domain-containing protein 2 (989 aa).

2 disordered regions span residues E23–N71 and S106–T147. The span at P36–R56 shows a compositional bias: basic and acidic residues. The residue at position 37 (S37) is a Phosphoserine. The segment covering T58–N71 has biased composition (basic residues). The segment covering S109–S143 has biased composition (basic and acidic residues). The residue at position 143 (S143) is a Phosphoserine. One can recognise an R3H domain in the interval R169–T232. In terms of domain architecture, SUZ spans R233–T303. Disordered regions lie at residues D267–E288, N306–P390, T416–P479, A493–Q524, G674–V738, R751–N793, and Q848–A867. Basic and acidic residues predominate over residues D277 to E288. The span at S320 to D331 shows a compositional bias: low complexity. A phosphoserine mark is found at S344, S347, and S363. Low complexity predominate over residues T416–P428. 2 stretches are compositionally biased toward polar residues: residues P454–T466 and A493–L517. Residues S695–M704 show a composition bias toward pro residues. Residues P705 to N727 are compositionally biased toward low complexity. Polar residues predominate over residues P761–M771. Residues S772–S790 are compositionally biased toward low complexity. 2 positions are modified to phosphoserine: S866 and S868. A phosphothreonine mark is found at T869 and T873.

The protein resides in the nucleus. The sequence is that of R3H domain-containing protein 2 (R3HDM2) from Bos taurus (Bovine).